Here is a 50-residue protein sequence, read N- to C-terminus: Photosystem II reaction center protein M (50 aa).

Residues 7-27 traverse the membrane as a helical segment; it reads GFVASLLFVGVPTIFLIGLFI.

Belongs to the PsbM family. In terms of assembly, PSII is composed of 1 copy each of membrane proteins PsbA, PsbB, PsbC, PsbD, PsbE, PsbF, PsbH, PsbI, PsbJ, PsbK, PsbL, PsbM, PsbT, PsbX, PsbY, Psb30/Ycf12, peripheral proteins PsbO, CyanoQ (PsbQ), PsbU, PsbV and a large number of cofactors. It forms dimeric complexes.

Its subcellular location is the cellular thylakoid membrane. Its function is as follows. One of the components of the core complex of photosystem II (PSII). PSII is a light-driven water:plastoquinone oxidoreductase that uses light energy to abstract electrons from H(2)O, generating O(2) and a proton gradient subsequently used for ATP formation. It consists of a core antenna complex that captures photons, and an electron transfer chain that converts photonic excitation into a charge separation. This subunit is found at the monomer-monomer interface. This chain is Photosystem II reaction center protein M, found in Prochlorococcus marinus (strain MIT 9515).